We begin with the raw amino-acid sequence, 285 residues long: 4-hydroxybenzoate octaprenyltransferase (285 aa).

7 helical membrane-spanning segments follow: residues 20 to 39 (GSYL…AQGL), 92 to 112 (ALGL…ALNW), 137 to 157 (FPQV…FMAV), 159 to 179 (EAVP…TVAY), 206 to 226 (YDRL…LGMG), 228 to 248 (YLGF…LFIH), and 260 to 280 (ACFS…LGIA).

It belongs to the UbiA prenyltransferase family. The cofactor is Mg(2+).

The protein resides in the cell inner membrane. It catalyses the reaction all-trans-octaprenyl diphosphate + 4-hydroxybenzoate = 4-hydroxy-3-(all-trans-octaprenyl)benzoate + diphosphate. It functions in the pathway cofactor biosynthesis; ubiquinone biosynthesis. Functionally, catalyzes the prenylation of para-hydroxybenzoate (PHB) with an all-trans polyprenyl group. Mediates the second step in the final reaction sequence of ubiquinone-8 (UQ-8) biosynthesis, which is the condensation of the polyisoprenoid side chain with PHB, generating the first membrane-bound Q intermediate 3-octaprenyl-4-hydroxybenzoate. The sequence is that of 4-hydroxybenzoate octaprenyltransferase from Pseudoalteromonas atlantica (strain T6c / ATCC BAA-1087).